The primary structure comprises 195 residues: Imidazoleglycerol-phosphate dehydratase (195 aa).

Belongs to the imidazoleglycerol-phosphate dehydratase family.

The protein localises to the cytoplasm. It carries out the reaction D-erythro-1-(imidazol-4-yl)glycerol 3-phosphate = 3-(imidazol-4-yl)-2-oxopropyl phosphate + H2O. It participates in amino-acid biosynthesis; L-histidine biosynthesis; L-histidine from 5-phospho-alpha-D-ribose 1-diphosphate: step 6/9. The protein is Imidazoleglycerol-phosphate dehydratase of Campylobacter concisus (strain 13826).